Consider the following 619-residue polypeptide: UPF0329 protein ECU01_0100/ECU01_1510/ECU08_0030 (619 aa).

The span at 350–384 (REEREKREKREKREESKGRGKRGAGEAKEESKEED) shows a compositional bias: basic and acidic residues. The segment at 350–428 (REEREKREKR…GKRKGDGHHY (79 aa)) is disordered. Over residues 385–399 (GKEEEGVEAEEEESA) the composition is skewed to acidic residues. The segment covering 411–428 (ARRKKSLKGKRKGDGHHY) has biased composition (basic residues).

This sequence belongs to the UPF0329 family.

The chain is UPF0329 protein ECU01_0100/ECU01_1510/ECU08_0030 from Encephalitozoon cuniculi (strain GB-M1) (Microsporidian parasite).